A 271-amino-acid polypeptide reads, in one-letter code: Extent of cell elongation protein 1 (271 aa).

Residues 1–18 form the signal peptide; sequence MKFSKIACATVFALSSQA. The helical transmembrane segment at 62-82 threads the bilayer; it reads SIIGIIMGILGNIPQVIQIIM.

In terms of assembly, polymerizes in solution to form membrane pores. Post-translationally, cleavage by KEX2 generates 8 peptides ECE1-I to ECE1-VIII, all terminating in Lys-Arg. Only peptide ECE1-III, called candidalysin, shows toxin activity.

Its subcellular location is the secreted. It localises to the host cell membrane. Secreted protein cleaved by KEX2 in 8 similar peptides (ECE1-I to ECE1-VIII). Stimulates biofilm formation. Its function is as follows. Acts as a cytolytic peptide toxin that directly damages host epithelial membranes, triggers a danger response signaling pathway and activates epithelial immunity. Polymerizes in solution to form membrane pores to damage epithelial cells. Induces calcium influx, oxidative stress, mitochondrial dysfunction and ATP depletion in host cells, leading to epithelial necrosis. Serves as a danger signal that potentiates the immune response, and more specifically IL-17 response. Induces cytokine/chemokine secretion by host (especially CCL2/3/4, CXCL1 and S100A8), neutrophil recruitment, and promotes mortality in zebrafish and murine models of systemic fungal infection. Mediates distinct epithelial inflammatory responses through p38, EGFR-ERK and TREM-1/DAP12 pathways. Acts as one of the hypha-derived drivers of NLRP3 inflammasome responses in primary macrophages and thus contributes to the capacity to induce maturation and secretion of IL-1beta from primary macrophages. Stimulates mast cells by mediating cross-talk between signaling pathways activated by the dectin-1 receptor and MAPKs. Enables escape via the gasdermin-mediated pyroptosis, as well as a cell lysis pathway associated with macrophage extracellular trap formation termed ETosis. Acts as the main hemolytic factor of C.albicans. As an exotoxine, also promotes alcohol-associated liver disease or oral carcinogenesis. In Candida albicans (strain SC5314 / ATCC MYA-2876) (Yeast), this protein is Extent of cell elongation protein 1.